Here is a 198-residue protein sequence, read N- to C-terminus: Recombination protein RecR (198 aa).

The segment at 57 to 72 (CSTCQTLTDQDPCAIC) adopts a C4-type zinc-finger fold. The 96-residue stretch at 80-175 (RMICVVEGVP…KVTRIAQGVP (96 aa)) folds into the Toprim domain.

It belongs to the RecR family.

May play a role in DNA repair. It seems to be involved in an RecBC-independent recombinational process of DNA repair. It may act with RecF and RecO. The polypeptide is Recombination protein RecR (Anaeromyxobacter dehalogenans (strain 2CP-C)).